The sequence spans 193 residues: MFVTSAFAEETAPAVTGGDTHSGTGVPAEAHGTFPPFDPATFPSQLLWLAITFGLFYLFLKKVAMPRIGGIIDVRNDRISQDLDQASKLKGEADAAVAAYEQELAEAKKNASSIGQQAADAAKAEAETARKKIEAALDEKLGEAEARISSIKANAMKEVGSIAEDTASAIVEALVGGKASKAEIAAAVKSVAR.

Residues 13-32 (PAVTGGDTHSGTGVPAEAHG) form a disordered region. A helical membrane pass occupies residues 40 to 60 (ATFPSQLLWLAITFGLFYLFL).

This sequence belongs to the ATPase B chain family. F-type ATPases have 2 components, F(1) - the catalytic core - and F(0) - the membrane proton channel. F(1) has five subunits: alpha(3), beta(3), gamma(1), delta(1), epsilon(1). F(0) has three main subunits: a(1), b(2) and c(10-14). The alpha and beta chains form an alternating ring which encloses part of the gamma chain. F(1) is attached to F(0) by a central stalk formed by the gamma and epsilon chains, while a peripheral stalk is formed by the delta and b chains.

The protein resides in the cell inner membrane. F(1)F(0) ATP synthase produces ATP from ADP in the presence of a proton or sodium gradient. F-type ATPases consist of two structural domains, F(1) containing the extramembraneous catalytic core and F(0) containing the membrane proton channel, linked together by a central stalk and a peripheral stalk. During catalysis, ATP synthesis in the catalytic domain of F(1) is coupled via a rotary mechanism of the central stalk subunits to proton translocation. Functionally, component of the F(0) channel, it forms part of the peripheral stalk, linking F(1) to F(0). This chain is ATP synthase subunit b 1, found in Mesorhizobium japonicum (strain LMG 29417 / CECT 9101 / MAFF 303099) (Mesorhizobium loti (strain MAFF 303099)).